We begin with the raw amino-acid sequence, 296 residues long: Light-inducible protein CPRF3 (296 aa).

Disordered stretches follow at residues 1–27, 98–165, and 190–223; these read MSDG…ITTT, PNLA…GSLE, and RVND…KSDE. Residues 107–117 are compositionally biased toward basic and acidic residues; the sequence is VGRKISDEKGR. Residues 145-156 show a composition bias toward low complexity; the sequence is SSSDNDCPSLSS. Residues 196–259 form the bZIP domain; sequence ELKRQRRKQS…AEVTSENHSI (64 aa). Residues 198–220 are basic motif; it reads KRQRRKQSNRESARRSRLRKQAK. Positions 224–245 are leucine-zipper; that stretch reads LQERLDNLSKENRILRKNLQRI.

It belongs to the bZIP family. In terms of assembly, binds DNA as a dimer.

The protein resides in the nucleus. In terms of biological role, binds to the G-box-like motif (5'-ACGTGGC-3') of the chalcone synthase (CHS) gene promoter. G-box and G-box-like motifs are defined in promoters of certain plant genes which are regulated by such diverse stimuli as light-induction or hormone control. This Petroselinum crispum (Parsley) protein is Light-inducible protein CPRF3 (CPRF3).